Here is a 615-residue protein sequence, read N- to C-terminus: DNA mismatch repair protein MutL (615 aa).

The interval 363-397 is disordered; the sequence is FAEPAAREPVAPRYSPAPASGSRPAAPWPNAQPGY. A compositionally biased stretch (low complexity) spans 364 to 387; sequence AEPAAREPVAPRYSPAPASGSRPA.

Belongs to the DNA mismatch repair MutL/HexB family.

This protein is involved in the repair of mismatches in DNA. It is required for dam-dependent methyl-directed DNA mismatch repair. May act as a 'molecular matchmaker', a protein that promotes the formation of a stable complex between two or more DNA-binding proteins in an ATP-dependent manner without itself being part of a final effector complex. The chain is DNA mismatch repair protein MutL from Shigella flexneri.